A 555-amino-acid chain; its full sequence is Probable Xaa-Pro aminopeptidase BC1G_13431 (555 aa).

Mn(2+) contacts are provided by aspartate 303, aspartate 314, glutamate 458, and glutamate 499. The disordered stretch occupies residues 527 to 555; it reads EGKEQEEEEEREANRKATESRKQKKTWFW. The span at 538 to 547 shows a compositional bias: basic and acidic residues; the sequence is EANRKATESR.

Belongs to the peptidase M24B family. Mn(2+) is required as a cofactor.

It catalyses the reaction Release of any N-terminal amino acid, including proline, that is linked to proline, even from a dipeptide or tripeptide.. Functionally, catalyzes the removal of a penultimate prolyl residue from the N-termini of peptides. In Botryotinia fuckeliana (strain B05.10) (Noble rot fungus), this protein is Probable Xaa-Pro aminopeptidase BC1G_13431.